The following is a 355-amino-acid chain: tRNA-specific 2-thiouridylase MnmA (355 aa).

Residues 6–13 (LLSGGVDS) and L33 each bind ATP. Catalysis depends on C100, which acts as the Nucleophile. C100 and C195 are oxidised to a cystine. G123 contacts ATP. The tract at residues 145–147 (KDQ) is interaction with tRNA. C195 (cysteine persulfide intermediate) is an active-site residue.

Belongs to the MnmA/TRMU family.

Its subcellular location is the cytoplasm. The enzyme catalyses S-sulfanyl-L-cysteinyl-[protein] + uridine(34) in tRNA + AH2 + ATP = 2-thiouridine(34) in tRNA + L-cysteinyl-[protein] + A + AMP + diphosphate + H(+). In terms of biological role, catalyzes the 2-thiolation of uridine at the wobble position (U34) of tRNA, leading to the formation of s(2)U34. In Borreliella burgdorferi (strain ATCC 35210 / DSM 4680 / CIP 102532 / B31) (Borrelia burgdorferi), this protein is tRNA-specific 2-thiouridylase MnmA.